Consider the following 293-residue polypeptide: Bifunctional monothiol glutaredoxin-S16, chloroplastic (293 aa).

A chloroplast-targeting transit peptide spans 1–62; it reads MAAITISSSL…APSRRRSFFI (62 aa). Cysteines 123 and 219 form a disulfide. Positions 194 to 293 constitute a Glutaredoxin domain; sequence EELIDRLVKE…ENGELANILN (100 aa). Residue Lys211 participates in glutathione binding. Position 219 (Cys219) interacts with [2Fe-2S] cluster. Residues Arg251, Phe263, and 276–277 each bind glutathione; that span reads CD.

The protein belongs to the glutaredoxin family. CGFS subfamily. In terms of assembly, [2Fe-2S]-bridged holo-homodimer. Interacts in vitro with SUFE1, BOLA1, BOLA2 and BOLA4. Interacts in vivo only with SUFE1, BOLA1 and BOLA4. Interacts with SBP1.

It localises to the plastid. The protein localises to the chloroplast. Its activity is regulated as follows. The formation of an intramolecular disulfide bond negatively regulates both the N-terminal endonuclease and the C-terminal glutaredoxin activities. Functionally, may only reduce GSH-thiol disulfides, but not protein disulfides. Participates probably to the maturation of iron-sulfur proteins and to the regulation of the redox state of the BOLA proteins. The GRXS16-BOLA1 heterodimer binds a labile, oxygen sensitive iron-sulfur cluster. Able to cleave linearized DNA in vitro. The chain is Bifunctional monothiol glutaredoxin-S16, chloroplastic from Arabidopsis thaliana (Mouse-ear cress).